The following is a 286-amino-acid chain: Energy-coupling factor transporter ATP-binding protein EcfA2 (286 aa).

One can recognise an ABC transporter domain in the interval 3–246 (IQFNQVSYIY…KTQLLKWHIE (244 aa)). Residue 40 to 47 (GQTGSGKS) participates in ATP binding.

Belongs to the ABC transporter superfamily. Energy-coupling factor EcfA family. In terms of assembly, forms a stable energy-coupling factor (ECF) transporter complex composed of 2 membrane-embedded substrate-binding proteins (S component), 2 ATP-binding proteins (A component) and 2 transmembrane proteins (T component).

It is found in the cell membrane. Functionally, ATP-binding (A) component of a common energy-coupling factor (ECF) ABC-transporter complex. Unlike classic ABC transporters this ECF transporter provides the energy necessary to transport a number of different substrates. The polypeptide is Energy-coupling factor transporter ATP-binding protein EcfA2 (Staphylococcus epidermidis (strain ATCC 35984 / DSM 28319 / BCRC 17069 / CCUG 31568 / BM 3577 / RP62A)).